Here is a 374-residue protein sequence, read N- to C-terminus: Ribosomal RNA large subunit methyltransferase G (374 aa).

This sequence belongs to the methyltransferase superfamily. RlmG family.

The protein localises to the cytoplasm. The catalysed reaction is guanosine(1835) in 23S rRNA + S-adenosyl-L-methionine = N(2)-methylguanosine(1835) in 23S rRNA + S-adenosyl-L-homocysteine + H(+). Its function is as follows. Specifically methylates the guanine in position 1835 (m2G1835) of 23S rRNA. The chain is Ribosomal RNA large subunit methyltransferase G from Pseudomonas aeruginosa (strain ATCC 15692 / DSM 22644 / CIP 104116 / JCM 14847 / LMG 12228 / 1C / PRS 101 / PAO1).